The primary structure comprises 269 residues: Shikimate dehydrogenase (NADP(+)) (269 aa).

Shikimate-binding positions include 17–19 (SKS) and Thr-64. Lys-68 functions as the Proton acceptor in the catalytic mechanism. Glu-80 contacts NADP(+). Residues Asn-89 and Asp-105 each contribute to the shikimate site. NADP(+)-binding positions include 130-134 (GAGGA), 154-159 (NRTHTK), and Met-213. Tyr-215 serves as a coordination point for shikimate. Gly-237 contacts NADP(+).

It belongs to the shikimate dehydrogenase family. Homodimer.

The enzyme catalyses shikimate + NADP(+) = 3-dehydroshikimate + NADPH + H(+). The protein operates within metabolic intermediate biosynthesis; chorismate biosynthesis; chorismate from D-erythrose 4-phosphate and phosphoenolpyruvate: step 4/7. Its function is as follows. Involved in the biosynthesis of the chorismate, which leads to the biosynthesis of aromatic amino acids. Catalyzes the reversible NADPH linked reduction of 3-dehydroshikimate (DHSA) to yield shikimate (SA). The protein is Shikimate dehydrogenase (NADP(+)) of Neisseria mucosa.